A 452-amino-acid chain; its full sequence is Probable multidrug resistance protein NorM (452 aa).

12 consecutive transmembrane segments (helical) span residues 13–34 (QFVL…MSFF), 49–71 (GVAI…LMAT), 92–114 (IQAV…FVVS), 129–151 (IAAQ…TVLR), 164–183 (MIIT…LLIF), 193–215 (GVGA…VIII), 240–262 (AFLK…FAAV), 282–304 (NFAS…AVGF), 317–339 (YGLI…LYFF), 359–381 (EFLI…QGAL), 388–410 (NVAL…YILA), and 420–442 (YWIG…LFQV).

It belongs to the multi antimicrobial extrusion (MATE) (TC 2.A.66.1) family.

Its subcellular location is the cell membrane. Multidrug efflux pump. This Bacillus cereus (strain ATCC 14579 / DSM 31 / CCUG 7414 / JCM 2152 / NBRC 15305 / NCIMB 9373 / NCTC 2599 / NRRL B-3711) protein is Probable multidrug resistance protein NorM (norM).